Here is a 532-residue protein sequence, read N- to C-terminus: Vesicular acetylcholine transporter (532 aa).

Residues 1–33 (MESAEPAGQARAAATKLSEAVGAALQEPRRQRR) are Cytoplasmic-facing. The helical transmembrane segment at 34 to 54 (LVLVIVCVALLLDNMLYMVIV) threads the bilayer. Residues 55-125 (PIVPDYIAHM…PTESEDVKIG (71 aa)) lie on the Lumenal, vesicle side of the membrane. N-linked (GlcNAc...) asparagine glycosylation is found at Asn89 and Asn96. A helical membrane pass occupies residues 126-146 (VLFASKAILQLLVNPLSGPFI). Topologically, residues 147 to 152 (DRMSYD) are cytoplasmic. The helical transmembrane segment at 153–173 (VPLLIGLGVMFASTVLFAFAE) threads the bilayer. The Lumenal, vesicle portion of the chain corresponds to 174 to 182 (DYATLFAAR). A helical membrane pass occupies residues 183 to 203 (SLQGLGSAFADTSGIAMIADK). The Cytoplasmic segment spans residues 204–213 (YPEEPERSRA). Residues 214–234 (LGVALAFISFGSLVAPPFGGI) traverse the membrane as a helical segment. Residues 235–242 (LYEFAGKR) lie on the Lumenal, vesicle side of the membrane. A helical transmembrane segment spans residues 243–263 (VPFLVLAAVSLFDALLLLAVA). The Cytoplasmic segment spans residues 264–289 (KPFSAAARARANLPVGTPIHRLMLDP). A helical membrane pass occupies residues 290–310 (YIAVVAGALTTCNIPLAFLEP). At 311-325 (TIATWMKHTMAASEW) the chain is on the lumenal, vesicle side. Residues 326–346 (EMGMAWLPAFVPHVLGVYLTV) traverse the membrane as a helical segment. Over 347-356 (RLAARYPHLQ) the chain is Cytoplasmic. Residues 357–377 (WLYGALGLAVIGASSCIVPAC) form a helical membrane-spanning segment. The Lumenal, vesicle segment spans residues 378–388 (RSFAPLVVSLC). The helical transmembrane segment at 389-409 (GLCFGIALVDTALLPTLAFLV) threads the bilayer. At 410-422 (DVRHVSVYGSVYA) the chain is on the cytoplasmic side. A helical membrane pass occupies residues 423–443 (IADISYSVAYALGPIVAGHIV). Topologically, residues 444 to 447 (HSLG) are lumenal, vesicle. Residues 448-468 (FEQLSLGMGLANLLYAPVLLL) traverse the membrane as a helical segment. Over 469-532 (LRNVGLLTRS…DDYNYYYTRS (64 aa)) the chain is Cytoplasmic. Residues 471–532 (NVGLLTRSRS…DDYNYYYTRS (62 aa)) are mediates interaction with SEC14L1. A disordered region spans residues 502 to 523 (RPVSGQDGEPRSPPGPFDACED).

The protein belongs to the major facilitator superfamily. Vesicular transporter family. Interacts with SEC14L1. In terms of tissue distribution, peripheral and central cholinergic nervous systems.

It localises to the cytoplasmic vesicle. The protein localises to the secretory vesicle. It is found in the synaptic vesicle membrane. The catalysed reaction is acetylcholine(out) + 2 H(+)(in) = acetylcholine(in) + 2 H(+)(out). It carries out the reaction choline(in) + 2 H(+)(out) = choline(out) + 2 H(+)(in). The enzyme catalyses serotonin(in) + 2 H(+)(out) = serotonin(out) + 2 H(+)(in). Potently inhibited by L-vesamicol, reserpine and tetrabenazine. Electrogenic antiporter that exchanges one cholinergic neurotransmitter, acetylcholine or choline, with two intravesicular protons across the membrane of synaptic vesicles. Uses the electrochemical proton gradient established by the V-type proton-pump ATPase to store neurotransmitters inside the vesicles prior to their release via exocytosis. Determines cholinergic vesicular quantal size at presynaptic nerve terminals in developing neuro-muscular junctions with an impact on motor neuron differentiation and innervation pattern. Part of forebrain cholinergic system, regulates hippocampal synapse transmissions that underlie spatial memory formation. Can transport serotonin. In Homo sapiens (Human), this protein is Vesicular acetylcholine transporter (SLC18A3).